Consider the following 894-residue polypeptide: Translation initiation factor IF-2 (894 aa).

Residues 25–304 (ADAGMNKASS…KPTSMQHGFD (280 aa)) form a disordered region. 5 stretches are compositionally biased toward basic and acidic residues: residues 33-44 (SSDHVSDEEKQK), 52-62 (EHGDKSGESEP), 101-174 (STIE…KEMN), 184-239 (AKKE…ENSD), and 247-263 (YARE…EGGA). Residues 283 to 293 (RGGKGRNKGKL) are compositionally biased toward basic residues. Positions 393–562 (PRAPVVTIMG…LLQSEVLELT (170 aa)) constitute a tr-type G domain. The segment at 402 to 409 (GHVDHGKT) is G1. 402 to 409 (GHVDHGKT) is a binding site for GTP. Residues 427-431 (GITQH) are G2. The G3 stretch occupies residues 448–451 (DTPG). Residues 448–452 (DTPGH) and 502–505 (NKID) contribute to the GTP site. The G4 stretch occupies residues 502-505 (NKID). A G5 region spans residues 538–540 (SAK).

The protein belongs to the TRAFAC class translation factor GTPase superfamily. Classic translation factor GTPase family. IF-2 subfamily.

It localises to the cytoplasm. Its function is as follows. One of the essential components for the initiation of protein synthesis. Protects formylmethionyl-tRNA from spontaneous hydrolysis and promotes its binding to the 30S ribosomal subunits. Also involved in the hydrolysis of GTP during the formation of the 70S ribosomal complex. The polypeptide is Translation initiation factor IF-2 (Vibrio campbellii (strain ATCC BAA-1116)).